A 459-amino-acid polypeptide reads, in one-letter code: Putrescine aminotransferase (459 aa).

Pyridoxal 5'-phosphate is bound by residues 150-151 (GT) and Q274. N6-(pyridoxal phosphate)lysine is present on K300. T332 lines the pyridoxal 5'-phosphate pocket.

This sequence belongs to the class-III pyridoxal-phosphate-dependent aminotransferase family. Putrescine aminotransferase subfamily. The cofactor is pyridoxal 5'-phosphate.

The catalysed reaction is an alkane-alpha,omega-diamine + 2-oxoglutarate = an omega-aminoaldehyde + L-glutamate. The enzyme catalyses putrescine + 2-oxoglutarate = 1-pyrroline + L-glutamate + H2O. It catalyses the reaction cadaverine + 2-oxoglutarate = 5-aminopentanal + L-glutamate. Its pathway is amine and polyamine degradation; putrescine degradation; 4-aminobutanal from putrescine (transaminase route): step 1/1. In terms of biological role, catalyzes the aminotransferase reaction from putrescine to 2-oxoglutarate, leading to glutamate and 4-aminobutanal, which spontaneously cyclizes to form 1-pyrroline. This is the first step in one of two pathways for putrescine degradation, where putrescine is converted into 4-aminobutanoate (gamma-aminobutyrate or GABA) via 4-aminobutanal. Also functions as a cadaverine transaminase in a a L-lysine degradation pathway to succinate that proceeds via cadaverine, glutarate and L-2-hydroxyglutarate. The protein is Putrescine aminotransferase of Escherichia fergusonii (strain ATCC 35469 / DSM 13698 / CCUG 18766 / IAM 14443 / JCM 21226 / LMG 7866 / NBRC 102419 / NCTC 12128 / CDC 0568-73).